Reading from the N-terminus, the 430-residue chain is Histidine--tRNA ligase (430 aa).

Belongs to the class-II aminoacyl-tRNA synthetase family. In terms of assembly, homodimer.

The protein resides in the cytoplasm. The catalysed reaction is tRNA(His) + L-histidine + ATP = L-histidyl-tRNA(His) + AMP + diphosphate + H(+). The polypeptide is Histidine--tRNA ligase (Acinetobacter baumannii (strain AB307-0294)).